Reading from the N-terminus, the 340-residue chain is MTEKNAYAQSGVDVEAGYEVVERIKKHVARTERAGVMGALGGFGGMFDLSKTGVKEPVLISGTDGVGTKLMLAIKYDKHDTIGQDCVAMCVNDIIAAGAEPLYFLDYIATGKNEPAKLEQVVAGVAEGCVQAGAALIGGETAEMPGMYGEDDYDLAGFAVGIAEKSQIIDGSKVSEGDVLLGLASSGIHSNGYSLVRRVFADYEGEAILPELEGKALKEVLLEPTRIYVKAVLPLVKENLVNGIAHITGGGFIENVPRMFSEELAAEIWEEKVPVLPIFKALETYGEIKHDEMFEIFNMGIGMMLAVKAENVARVKELLDEPVYEIGRIIKKEDKSVIIK.

Belongs to the AIR synthase family.

Its subcellular location is the cytoplasm. The catalysed reaction is 2-formamido-N(1)-(5-O-phospho-beta-D-ribosyl)acetamidine + ATP = 5-amino-1-(5-phospho-beta-D-ribosyl)imidazole + ADP + phosphate + H(+). Its pathway is purine metabolism; IMP biosynthesis via de novo pathway; 5-amino-1-(5-phospho-D-ribosyl)imidazole from N(2)-formyl-N(1)-(5-phospho-D-ribosyl)glycinamide: step 2/2. The polypeptide is Phosphoribosylformylglycinamidine cyclo-ligase (Streptococcus uberis (strain ATCC BAA-854 / 0140J)).